The following is a 265-amino-acid chain: MDTAQKQRWAITLSYDGSRFYGWQKQADGVPTVQAALETALAQIAGEAVSTTVAGRTDTGVHATAQVVHFDTAAVRPVQAWVRGVNAHLPEGIAVLHARQVAPEFHARFDAYGRHYRYLLESAPVRSPLLKNRAGWTHLKLDIGQMRQAAALLIGEQDFSSFRAAECQAKSPVKTIYRADLTQSSGLVRLDLHGNAFLHHMVRNIMGALVYVGSGRLSVEGFAALIQERSRLKAPPTFMPDGLYLTGVDYPEAYGIIRPQIPEWL.

Residue Asp58 is the Nucleophile of the active site. Tyr116 lines the substrate pocket.

It belongs to the tRNA pseudouridine synthase TruA family. As to quaternary structure, homodimer.

It carries out the reaction uridine(38/39/40) in tRNA = pseudouridine(38/39/40) in tRNA. Functionally, formation of pseudouridine at positions 38, 39 and 40 in the anticodon stem and loop of transfer RNAs. The polypeptide is tRNA pseudouridine synthase A (Neisseria meningitidis serogroup C (strain 053442)).